The following is a 188-amino-acid chain: dCTP deaminase, dUMP-forming (188 aa).

DCTP-binding positions include 101–106 (KSSLGR), D119, 127–129 (TLE), Q148, Y162, and Q174. Residue E129 is the Proton donor/acceptor of the active site.

Belongs to the dCTP deaminase family. As to quaternary structure, homotrimer.

It carries out the reaction dCTP + 2 H2O = dUMP + NH4(+) + diphosphate. The protein operates within pyrimidine metabolism; dUMP biosynthesis; dUMP from dCTP: step 1/1. Bifunctional enzyme that catalyzes both the deamination of dCTP to dUTP and the hydrolysis of dUTP to dUMP without releasing the toxic dUTP intermediate. The polypeptide is dCTP deaminase, dUMP-forming (Corynebacterium jeikeium (strain K411)).